The primary structure comprises 248 residues: 2,3-bisphosphoglycerate-dependent phosphoglycerate mutase (248 aa).

Residues 8-15 (RHGESTWN), 21-22 (TG), arginine 60, 87-90 (EKHY), lysine 98, 114-115 (RR), and 183-184 (GN) contribute to the substrate site. The active-site Tele-phosphohistidine intermediate is histidine 9. Glutamate 87 acts as the Proton donor/acceptor in catalysis.

It belongs to the phosphoglycerate mutase family. BPG-dependent PGAM subfamily.

It carries out the reaction (2R)-2-phosphoglycerate = (2R)-3-phosphoglycerate. Its pathway is carbohydrate degradation; glycolysis; pyruvate from D-glyceraldehyde 3-phosphate: step 3/5. Catalyzes the interconversion of 2-phosphoglycerate and 3-phosphoglycerate. This is 2,3-bisphosphoglycerate-dependent phosphoglycerate mutase from Elusimicrobium minutum (strain Pei191).